The sequence spans 334 residues: Holliday junction branch migration complex subunit RuvB (334 aa).

The segment at Met1–Tyr181 is large ATPase domain (RuvB-L). ATP contacts are provided by residues Leu20, Arg21, Gly62, Lys65, Thr66, Thr67, Glu128–Phe130, Arg171, Tyr181, and Arg218. Thr66 lines the Mg(2+) pocket. A small ATPAse domain (RuvB-S) region spans residues Gln182–Asp252. The interval His255–Glu334 is head domain (RuvB-H). Positions 291, 310, 312, and 315 each coordinate DNA.

This sequence belongs to the RuvB family. Homohexamer. Forms an RuvA(8)-RuvB(12)-Holliday junction (HJ) complex. HJ DNA is sandwiched between 2 RuvA tetramers; dsDNA enters through RuvA and exits via RuvB. An RuvB hexamer assembles on each DNA strand where it exits the tetramer. Each RuvB hexamer is contacted by two RuvA subunits (via domain III) on 2 adjacent RuvB subunits; this complex drives branch migration. In the full resolvosome a probable DNA-RuvA(4)-RuvB(12)-RuvC(2) complex forms which resolves the HJ.

The protein localises to the cytoplasm. It catalyses the reaction ATP + H2O = ADP + phosphate + H(+). Its function is as follows. The RuvA-RuvB-RuvC complex processes Holliday junction (HJ) DNA during genetic recombination and DNA repair, while the RuvA-RuvB complex plays an important role in the rescue of blocked DNA replication forks via replication fork reversal (RFR). RuvA specifically binds to HJ cruciform DNA, conferring on it an open structure. The RuvB hexamer acts as an ATP-dependent pump, pulling dsDNA into and through the RuvAB complex. RuvB forms 2 homohexamers on either side of HJ DNA bound by 1 or 2 RuvA tetramers; 4 subunits per hexamer contact DNA at a time. Coordinated motions by a converter formed by DNA-disengaged RuvB subunits stimulates ATP hydrolysis and nucleotide exchange. Immobilization of the converter enables RuvB to convert the ATP-contained energy into a lever motion, pulling 2 nucleotides of DNA out of the RuvA tetramer per ATP hydrolyzed, thus driving DNA branch migration. The RuvB motors rotate together with the DNA substrate, which together with the progressing nucleotide cycle form the mechanistic basis for DNA recombination by continuous HJ branch migration. Branch migration allows RuvC to scan DNA until it finds its consensus sequence, where it cleaves and resolves cruciform DNA. This is Holliday junction branch migration complex subunit RuvB from Streptococcus uberis (strain ATCC BAA-854 / 0140J).